A 350-amino-acid polypeptide reads, in one-letter code: Ketol-acid reductoisomerase (NADP(+)) (350 aa).

One can recognise a KARI N-terminal Rossmann domain in the interval alanine 3 to threonine 183. NADP(+)-binding positions include tyrosine 26–glutamine 29, arginine 49, serine 52, serine 54, and aspartate 84–glutamine 87. Residue histidine 109 is part of the active site. Glycine 135 provides a ligand contact to NADP(+). A KARI C-terminal knotted domain is found at threonine 184–asparagine 327. Positions 192, 196, 228, and 232 each coordinate Mg(2+). Serine 253 contacts substrate.

It belongs to the ketol-acid reductoisomerase family. Mg(2+) is required as a cofactor.

It carries out the reaction (2R)-2,3-dihydroxy-3-methylbutanoate + NADP(+) = (2S)-2-acetolactate + NADPH + H(+). The enzyme catalyses (2R,3R)-2,3-dihydroxy-3-methylpentanoate + NADP(+) = (S)-2-ethyl-2-hydroxy-3-oxobutanoate + NADPH + H(+). It functions in the pathway amino-acid biosynthesis; L-isoleucine biosynthesis; L-isoleucine from 2-oxobutanoate: step 2/4. Its pathway is amino-acid biosynthesis; L-valine biosynthesis; L-valine from pyruvate: step 2/4. Functionally, involved in the biosynthesis of branched-chain amino acids (BCAA). Catalyzes an alkyl-migration followed by a ketol-acid reduction of (S)-2-acetolactate (S2AL) to yield (R)-2,3-dihydroxy-isovalerate. In the isomerase reaction, S2AL is rearranged via a Mg-dependent methyl migration to produce 3-hydroxy-3-methyl-2-ketobutyrate (HMKB). In the reductase reaction, this 2-ketoacid undergoes a metal-dependent reduction by NADPH to yield (R)-2,3-dihydroxy-isovalerate. The polypeptide is Ketol-acid reductoisomerase (NADP(+)) (Bifidobacterium animalis subsp. lactis (strain AD011)).